The following is a 142-amino-acid chain: Large ribosomal subunit protein uL13 (142 aa).

The protein belongs to the universal ribosomal protein uL13 family. In terms of assembly, part of the 50S ribosomal subunit.

This protein is one of the early assembly proteins of the 50S ribosomal subunit, although it is not seen to bind rRNA by itself. It is important during the early stages of 50S assembly. The sequence is that of Large ribosomal subunit protein uL13 from Shewanella baltica (strain OS185).